Reading from the N-terminus, the 1202-residue chain is Nitric oxide synthase 3 (1202 aa).

Positions 1-70 (MGNLKSVGQE…PPDGPKFPRV (70 aa)) are disordered. The N-myristoyl glycine moiety is linked to residue G2. S-palmitoyl cysteine attachment occurs at residues C15 and C26. Over residues 15 to 27 (CGLGLGLGLGLCG) the composition is skewed to gly residues. The segment covering 33–65 (SPAPEPSQAPVPPSPTRPAPDHSPPLTRPPDGP) has biased composition (pro residues). Zn(2+) contacts are provided by C93 and C98. The interaction with NOSIP stretch occupies residues 97–485 (RCLGSLVFPR…PDPWKGSAAK (389 aa)). Position 101 (S101) interacts with (6R)-L-erythro-5,6,7,8-tetrahydrobiopterin. C183 is a binding site for heme b. L-arginine-binding residues include Q246, W355, Y356, and E360. Residues A445, W446, and F459 each coordinate (6R)-L-erythro-5,6,7,8-tetrahydrobiopterin. Y474 provides a ligand contact to heme b. The interval 489-509 (ITRKKTFKEVANAVKISASLM) is calmodulin-binding. Position 494 is a phosphothreonine; by AMPK (T494). The Flavodoxin-like domain occupies 519–702 (ATILYGSETG…AFRGWAQAAF (184 aa)). Positions 525, 526, 527, 529, 571, and 572 each coordinate FMN. Residues S614, S632, and S637 each carry the phosphoserine modification. FMN-binding residues include S653, C660, E686, and Q690. The region spanning 755–1001 (RKMFQATILS…IRGAPSFRLP (247 aa)) is the FAD-binding FR-type domain. R775 is an NADP(+) binding site. Residue H797 coordinates FAD. The interval 817–843 (EDPPPSTEPVAVEQLEKGSPGGPPPGW) is disordered. S835 is subject to Phosphoserine. FAD is bound by residues R937, Y939, S940, T955, A957, Y961, V974, C975, and S976. NADP(+)-binding residues include T1015, R1048, S1077, R1078, K1084, Y1086, and Q1088. Residue T1174 is modified to Phosphothreonine. S1176 is modified (phosphoserine; by AMPK). S1178 carries the post-translational modification Phosphoserine.

It belongs to the NOS family. In terms of assembly, homodimer. Interacts with NOSIP and NOSTRIN. Interacts with HSP90AB1. Forms a complex with ASL, ASS1 and SLC7A1; the complex regulates cell-autonomous L-arginine synthesis and citrulline recycling while channeling extracellular L-arginine to nitric oxide synthesis pathway. Requires heme b as cofactor. FAD serves as cofactor. FMN is required as a cofactor. It depends on (6R)-L-erythro-5,6,7,8-tetrahydrobiopterin as a cofactor. Post-translationally, phosphorylation by AMPK at Ser-1176 in the presence of Ca(2+)-calmodulin (CaM) activates activity. In absence of Ca(2+)-calmodulin, AMPK also phosphorylates Thr-494, resulting in inhibition of activity. Expressed constitutively by vascular endothelium. Detected in alveolar and serosal epithelial cells as well as in endothelial cells in one day old rat. In adult lung, detected in rare endothelial cells.

The protein resides in the membrane. The protein localises to the caveola. It is found in the cytoplasm. It localises to the cytoskeleton. Its subcellular location is the golgi apparatus. The protein resides in the cell membrane. It catalyses the reaction 2 L-arginine + 3 NADPH + 4 O2 + H(+) = 2 L-citrulline + 2 nitric oxide + 3 NADP(+) + 4 H2O. Stimulated by calcium/calmodulin. Inhibited by NOSIP and NOSTRIN. Produces nitric oxide (NO) which is implicated in vascular smooth muscle relaxation through a cGMP-mediated signal transduction pathway. NO mediates vascular endothelial growth factor (VEGF)-induced angiogenesis in coronary vessels and promotes blood clotting through the activation of platelets. The chain is Nitric oxide synthase 3 from Rattus norvegicus (Rat).